Consider the following 418-residue polypeptide: Putative competence-damage inducible protein (418 aa).

It belongs to the CinA family.

This Streptococcus gordonii (strain Challis / ATCC 35105 / BCRC 15272 / CH1 / DL1 / V288) protein is Putative competence-damage inducible protein.